The chain runs to 94 residues: ATP synthase F(0) complex subunit f, mitochondrial (94 aa).

Alanine 2 bears the N-acetylalanine mark. Serine 3 is modified (phosphoserine). Lysine 22 carries the N6-acetyllysine modification. Residues methionine 68–leucine 85 traverse the membrane as a helical segment.

Belongs to the ATPase F chain family. In terms of assembly, component of the ATP synthase complex composed at least of ATP5F1A/subunit alpha, ATP5F1B/subunit beta, ATP5MC1/subunit c (homooctomer), MT-ATP6/subunit a, MT-ATP8/subunit 8, ATP5ME/subunit e, ATP5MF/subunit f, ATP5MG/subunit g, ATP5MK/subunit k, ATP5MJ/subunit j, ATP5F1C/subunit gamma, ATP5F1D/subunit delta, ATP5F1E/subunit epsilon, ATP5PF/subunit F6, ATP5PB/subunit b, ATP5PD/subunit d, ATP5PO/subunit OSCP. ATP synthase complex consists of a soluble F(1) head domain (subunits alpha(3) and beta(3)) - the catalytic core - and a membrane F(0) domain - the membrane proton channel (subunits c, a, 8, e, f, g, k and j). These two domains are linked by a central stalk (subunits gamma, delta, and epsilon) rotating inside the F1 region and a stationary peripheral stalk (subunits F6, b, d, and OSCP).

Its subcellular location is the mitochondrion. It localises to the mitochondrion inner membrane. In terms of biological role, subunit f, of the mitochondrial membrane ATP synthase complex (F(1)F(0) ATP synthase or Complex V) that produces ATP from ADP in the presence of a proton gradient across the membrane which is generated by electron transport complexes of the respiratory chain. ATP synthase complex consist of a soluble F(1) head domain - the catalytic core - and a membrane F(1) domain - the membrane proton channel. These two domains are linked by a central stalk rotating inside the F(1) region and a stationary peripheral stalk. During catalysis, ATP synthesis in the catalytic domain of F(1) is coupled via a rotary mechanism of the central stalk subunits to proton translocation. In vivo, can only synthesize ATP although its ATP hydrolase activity can be activated artificially in vitro. Part of the complex F(0) domain. This is ATP synthase F(0) complex subunit f, mitochondrial from Homo sapiens (Human).